The chain runs to 244 residues: Ribosomal RNA small subunit methyltransferase G (244 aa).

Residues G84, F89, D107–T109, A135–E136, and R154 contribute to the S-adenosyl-L-methionine site.

Belongs to the methyltransferase superfamily. RNA methyltransferase RsmG family.

It localises to the cytoplasm. Its function is as follows. Specifically methylates the N7 position of a guanine in 16S rRNA. The chain is Ribosomal RNA small subunit methyltransferase G from Nostoc punctiforme (strain ATCC 29133 / PCC 73102).